A 526-amino-acid chain; its full sequence is Cytochrome P450 monooxygenase 226 (526 aa).

Residues 15–35 (FATSYAALTVAAVTLLAALLV) form a helical membrane-spanning segment. 3 N-linked (GlcNAc...) asparagine glycosylation sites follow: Asn219, Asn277, and Asn320. Residue Cys452 coordinates heme.

Belongs to the cytochrome P450 family. Heme is required as a cofactor.

The protein resides in the membrane. It functions in the pathway secondary metabolite biosynthesis. Cytochrome P450 monooxygenase that is able to use anthracene, carbazole and phenanthrene as substrates for oxidation. These multifunctional properties against a series of polycyclic aromatic hydrocarbons (PAHs) suggest that CYP226 would play important roles, at least in part, in fungal metabolic systems involved in xenobiotic detoxification. This Postia placenta (strain ATCC 44394 / Madison 698-R) (Brown rot fungus) protein is Cytochrome P450 monooxygenase 226.